The sequence spans 189 residues: MALSFSLLMAVLVLSYKSICSLGCDLPQTHSLGNRRALILLAQMGRISPFSCLKDRHDFGLPQEEFDGNQFQKTQAISVLHEMIQQTFNLFSTEDSSAAWEQSLLEKFSTELYQQLNNLEACVIQEVGMEETPLMNEDSILAVRKYFQRITLYLTEKKYSPCAWEVVRAEIMRSLSFSTNLQKILRRKD.

The signal sequence occupies residues 1–23 (MALSFSLLMAVLVLSYKSICSLG). 2 disulfide bridges follow: Cys24-Cys122 and Cys52-Cys162.

It belongs to the alpha/beta interferon family.

It localises to the secreted. Produced by macrophages, IFN-alpha have antiviral activities. Interferon stimulates the production of two enzymes: a protein kinase and an oligoadenylate synthetase. This Homo sapiens (Human) protein is Interferon alpha-17 (IFNA17).